The sequence spans 218 residues: Putative tRNA methyltransferase MG248 (218 aa).

This sequence belongs to the TrmK family.

It localises to the cytoplasm. The chain is Putative tRNA methyltransferase MG248 from Mycoplasma genitalium (strain ATCC 33530 / DSM 19775 / NCTC 10195 / G37) (Mycoplasmoides genitalium).